Consider the following 687-residue polypeptide: TWiK family of potassium channels protein 12 (687 aa).

Topologically, residues 1 to 21 (MTLFQKLQWFCQLIRLRAYYK) are cytoplasmic. The helical transmembrane segment at 22 to 42 (FLLLIAYTLFGAWLFRFYELQ) threads the bilayer. 3 N-linked (GlcNAc...) asparagine glycosylation sites follow: asparagine 53, asparagine 77, and asparagine 98. An intramembrane region (pore-forming) is located at residues 112-132 (WTWTGAMFYAGQLYTTIGYGY). Residues 142–162 (ICTVLYALFGIPCFLMYLKAI) form a helical membrane-spanning segment. At 163 to 212 (GKTLSKRLKKIYKRVRRSAFGKFLLPTRVTATKDGFEDPDASAEERKRKP) the chain is on the cytoplasmic side. Residues 213 to 233 (FPIPIAIILLIIWICFSASMF) traverse the membrane as a helical segment. The pore-forming intramembrane region spans 242 to 262 (FPSAVYFFIVSISTVGLGDML). The helical transmembrane segment at 270–290 (VFNFLLILFGLALLSMCFELI) threads the bilayer. The Cytoplasmic portion of the chain corresponds to 291–687 (TDRIAKWKQK…SKRDAPVNIV (397 aa)). The segment at 661-687 (SPSTSTSTSMIDSGYDLSKRDAPVNIV) is disordered. The segment covering 677–687 (LSKRDAPVNIV) has biased composition (basic and acidic residues).

It belongs to the two pore domain potassium channel (TC 1.A.1.8) family.

It is found in the membrane. In Caenorhabditis briggsae, this protein is TWiK family of potassium channels protein 12.